The sequence spans 446 residues: Chromosomal replication initiator protein DnaA (446 aa).

The domain I, interacts with DnaA modulators stretch occupies residues 1-81 (MENISDLWNS…AKLAIRFIIP (81 aa)). The segment at 81–109 (PQSQAEEDIDLPPVKPNPAQDDSAHLPQS) is domain II. A domain III, AAA+ region region spans residues 110–326 (MLNPKYTFDT…GALIRVVAYS (217 aa)). The ATP site is built by G154, G156, K157, and T158. The interval 327 to 446 (SLINKDINAD…QVEEINGILK (120 aa)) is domain IV, binds dsDNA.

This sequence belongs to the DnaA family. Oligomerizes as a right-handed, spiral filament on DNA at oriC.

It localises to the cytoplasm. Its function is as follows. Plays an essential role in the initiation and regulation of chromosomal replication. ATP-DnaA binds to the origin of replication (oriC) to initiate formation of the DNA replication initiation complex once per cell cycle. Binds the DnaA box (a 9 base pair repeat at the origin) and separates the double-stranded (ds)DNA. Forms a right-handed helical filament on oriC DNA; dsDNA binds to the exterior of the filament while single-stranded (ss)DNA is stabiized in the filament's interior. The ATP-DnaA-oriC complex binds and stabilizes one strand of the AT-rich DNA unwinding element (DUE), permitting loading of DNA polymerase. After initiation quickly degrades to an ADP-DnaA complex that is not apt for DNA replication. Binds acidic phospholipids. This chain is Chromosomal replication initiator protein DnaA, found in Bacillus cereus (strain B4264).